A 155-amino-acid polypeptide reads, in one-letter code: Basic phospholipase A2 PC1 (155 aa).

Positions 1–21 (MYPAHLLVLLAVCVSLLGASA) are cleaved as a signal peptide. Residues 22–27 (ISNRPR) constitute a propeptide that is removed on maturation. Intrachain disulfides connect Cys38-Cys98, Cys54-Cys144, Cys56-Cys72, Cys71-Cys125, Cys78-Cys118, Cys87-Cys111, and Cys105-Cys116. Residues Tyr55, Gly57, and Gly59 each coordinate Ca(2+). His75 is a catalytic residue. A Ca(2+)-binding site is contributed by Asp76. Residue Asp119 is part of the active site.

This sequence belongs to the phospholipase A2 family. Group I subfamily. D49 sub-subfamily. Ca(2+) serves as cofactor. As to expression, expressed by the venom gland.

It localises to the secreted. It carries out the reaction a 1,2-diacyl-sn-glycero-3-phosphocholine + H2O = a 1-acyl-sn-glycero-3-phosphocholine + a fatty acid + H(+). Functionally, snake venom phospholipase A2 (PLA2) that inhibits neuromuscular transmission by blocking acetylcholine release from the nerve termini. PLA2 catalyzes the calcium-dependent hydrolysis of the 2-acyl groups in 3-sn-phosphoglycerides. In Laticauda colubrina (Yellow-lipped sea krait), this protein is Basic phospholipase A2 PC1.